The sequence spans 745 residues: Dipeptidyl aminopeptidase 4 (745 aa).

The first 22 residues, 1 to 22 (MRLALFALFALMTVATALPAHA), serve as a signal peptide directing secretion. Substrate-binding residues include Glu-208 and Glu-209. Residues Ser-613, Asp-689, and His-721 each act as charge relay system in the active site.

Belongs to the peptidase S9B family. Homodimer.

It is found in the cytoplasm. It localises to the periplasm. It catalyses the reaction Release of an N-terminal dipeptide, Xaa-Yaa-|-Zaa-, from a polypeptide, preferentially when Yaa is Pro, provided Zaa is neither Pro nor hydroxyproline.. With respect to regulation, completely inhibited by the serine protease inhibitor diisopropyl fluorophosphate (DFP) and moderately by N-tosyl-L-phenyl-alanyl chloromethyl ketone (TPCK). Somewhat inhibited by phenylmethanesulfonyl fluoride (PMSF). Activity is not affected by thiol- or metalloprotease inhibitors, such as iodoacetate (IAA), EDTA, N-tosyl-L-lysyl chloromethyl ketone (TLCK), o-phenanthlorine, N-ethylmaleimide (NEM) or dithiothreitol (DTT). In terms of biological role, catalyzes the sequential release of Tyr-Pro, Phe-Pro and Gly-Pro from the N-terminus of peptides and proteins. Is able to cleaves bioactive peptide beta-casomorphin. The protein is Dipeptidyl aminopeptidase 4 of Pseudoxanthomonas mexicana.